The following is a 212-amino-acid chain: Uridine kinase (212 aa).

13-20 is an ATP binding site; it reads GASASGKS.

The protein belongs to the uridine kinase family.

Its subcellular location is the cytoplasm. It catalyses the reaction uridine + ATP = UMP + ADP + H(+). The enzyme catalyses cytidine + ATP = CMP + ADP + H(+). Its pathway is pyrimidine metabolism; CTP biosynthesis via salvage pathway; CTP from cytidine: step 1/3. It functions in the pathway pyrimidine metabolism; UMP biosynthesis via salvage pathway; UMP from uridine: step 1/1. This chain is Uridine kinase, found in Psychromonas ingrahamii (strain DSM 17664 / CCUG 51855 / 37).